The primary structure comprises 594 residues: Probable translation initiation factor IF-2 (594 aa).

Positions 3-220 (IRSPIVSVLG…MLMGLAQQYL (218 aa)) constitute a tr-type G domain. Positions 12-19 (GHVDHGKT) are G1. GTP is bound at residue 12-19 (GHVDHGKT). Residues 37-41 (GITQH) form a G2 region. Residues 76–79 (DTPG) are G3. GTP is bound by residues 76–80 (DTPGH) and 130–133 (NKID). The interval 130-133 (NKID) is G4. Residues 198–200 (SAI) are G5.

This sequence belongs to the TRAFAC class translation factor GTPase superfamily. Classic translation factor GTPase family. IF-2 subfamily.

Its function is as follows. Function in general translation initiation by promoting the binding of the formylmethionine-tRNA to ribosomes. Seems to function along with eIF-2. In Methanothermobacter thermautotrophicus (strain ATCC 29096 / DSM 1053 / JCM 10044 / NBRC 100330 / Delta H) (Methanobacterium thermoautotrophicum), this protein is Probable translation initiation factor IF-2 (infB).